Consider the following 490-residue polypeptide: Capsid protein (490 aa).

The segment at 79–143 (GETSEEESDS…TQPKTIPGQK (65 aa)) is disordered. The segment covering 81–94 (TSEEESDSGEEPEF) has biased composition (acidic residues). Basic and acidic residues predominate over residues 95–111 (EQVRMDRTGGTEIPKEE). Residues 122–125 (RKRK) carry the Nuclear localization signal motif. A CCHC-type zinc finger spans residues 411–428 (CRCWICNIEGHYANECPN). The tract at residues 464-490 (YKEEEEETSTEEDDGSSTSEDSDSESD) is disordered. Acidic residues predominate over residues 465–490 (KEEEEETSTEEDDGSSTSEDSDSESD).

Belongs to the caulimoviridae capsid protein family. Interacts (via nuclear localization signal) with host importin alpha.

The protein localises to the virion. It is found in the host nucleus. Self assembles to form an icosahedral capsid, about 50 nm in diameter, nm, composed of 420 subunits of the viral capsid protein. The capsid encapsulates the genomic dsDNA. Following virus entry into host cell, provides nuclear import of the viral genome. Virus particles do not enter the nucleus, but dock at the nuclear membrane through the interaction with host importins. The chain is Capsid protein from Arabidopsis thaliana (Mouse-ear cress).